Here is a 418-residue protein sequence, read N- to C-terminus: MLHPRARTMLLLSLPAVAIGIASSLILIMVMKIASVLQNLLWQRLPGTLGIAQDSPLWIIGVLTLTGIAVGLVIRFSQGHAGPDPACEPLIGAPIPPSALPGLIVALILGLAGGVSLGPEHPIITVNIALAVAIGARLLPRVNRMEWTILASAGTIGALFGTPVAAALIFSQTLNGSNEVPLWDRLFAPLMAAAAGALTTGLFFHPHFSLPIAHYGQMEMTDILSGAIVAAIAIAAGMVAVWCLPRLHAMMHQMKNPVFVLGIGGFILGILGVIGGPVSLFKGLDEMQQMVANQAFSTSDYFLLAVIKLAALVVAAASGFRGGRIFPAVFVGVALGLMLHEHVPAVPAAITVSCAILGIVLVVTRDGWLSLFMAAVVVPNTTLLPLLCIVMLPAWLLLAGKPMMMVNRQKQQPPHDNV.

11 helical membrane-spanning segments follow: residues 9 to 31 (MLLL…IMVM), 55 to 77 (SPLW…IRFS), 90 to 112 (LIGA…LGLA), 122 to 140 (PIIT…RLLP), 147 to 169 (WTIL…AALI), 189 to 211 (PLMA…FSLP), 223 to 244 (ILSG…VWCL), 259 to 281 (FVLG…VSLF), 301 to 323 (YFLL…FRGG), 343 to 363 (VPAV…VLVV), and 376 to 398 (VVVP…WLLL).

It belongs to the chloride channel (TC 2.A.49) family.

The protein resides in the cell membrane. This is Putative ion-transport protein YfeO (yfeO) from Escherichia coli O6:H1 (strain CFT073 / ATCC 700928 / UPEC).